Reading from the N-terminus, the 2839-residue chain is MPITQDNAVLHLPLLYQWLQNSLQEGGDGPEQRLCQAAIQKLQEYIQLNFAVDESTVPPDHSPPEMEICTVYLTKELGDTETVGLSFGNIPVFGDYGEKRRGGKKRKTHQGPVLDVGCIWVTELRKNSPAGKSGKVRLRDEILSLNGQLMVGVDVSGASYLAEQCWNGGFIYLIMLRRFKHKAHSTYNGNSSNSSEPGETPTLELGDRTAKKGKRTRKFGVISRPPANKAPEESKGSAGCEVSSDPSTELENGPDPELGNGHVFQLENGPDSLKEVAGPHLERSEVDRGTEHRIPKTDAPLTTSNDKRRFSKGGKTDFQSSDCLAREEVGRIWKMELLKESDGLGIQVSGGRGSKRSPHAIVVTQVKEGGAAHRDGRLSLGDELLVINGHLLVGLSHEEAVAILRSATGMVQLVVASKENSAEDLLRLTSKSLPDLTSSVEDVSSWTDNEDQEADGEEDEGTSSSVQRAMPGTDEPQDVCGAEESKGNLESPKQGSNKIKLKSRLSGGVHRLESVEEYNELMVRNGDPRIRMLEVSRDGRKHSLPQLLDSSSASQEYHIVKKSTRSLSTTQVESPWRLIRPSVISIIGLYKEKGKGLGFSIAGGRDCIRGQMGIFVKTIFPNGSAAEDGRLKEGDEILDVNGIPIKGLTFQEAIHTFKQIRSGLFVLTVRTKLVSPSLTPCSTPTHMSRSASPNFNTSGGASAGGSDEGSSSSLGRKTPGPKDRIVMEVTLNKEPRVGLGIGACCLALENSPPGIYIHSLAPGSVAKMESNLSRGDQILEVNSVNVRHAALSKVHAILSKCPPGPVRLVIGRHPNPKVSEQEMDEVIARSTYQESKEANSSPGLGTPLKSPSLAKKDSLISESELSQYFAHDVPGPLSDFMVAGSEDEDHPGSGCSTSEEGSLPPSTSTHKEPGKPRANSLVTLGSHRASGLFHKQVTVARQASLPGSPQALRNPLLRQRKVGCYDANDASDEEEFDREGDCISLPGALPGPIRPLSEDDPRRVSISSSKGMDVHNQEERPRKTLVSKAISAPLLGSSVDLEESIPEGMVDAASYAANLTDSAEAPKGSPGSWWKKELSGSSSAPKLEYTVRTDTQSPTNTGSPSSPQQKSEGLGSRHRPVARVSPHCKRSEAEAKPSGSQTVNLTGRANDPCDLDSRVQATSVKVTVAGFQPGGAVEKESLGKLTTGDACVSTSCELASALSHLDASHLTENLPKAASELGQQPMTELDSSSDLISSPGKKGAAHPDPSKTSVDTGQVSRPENPSQPASPRVTKCKARSPVRLPHEGSPSPGEKAAAPPDYSKTRSASETSTPHNTRRVAALRGAGPGAEGMTPAGAVLPGDPLTSQEQRQGAPGNHSKALEMTGIHAPESSQEPSLLEGADSVSSRAPQASLSMLPSTDNTKEACGHVSGHCCPGGSRESPVTDIDSFIKELDASAARSPSSQTGDSGSQEGSAQGHPPAGAGGGSSCRAEPVPGGQTSSPRRAWAAGAPAYPQWASQPSVLDSINPDKHFTVNKNFLSNYSRNFSSFHEDSTSLSGLGDSTEPSLSSMYGDAEDSSSDPESLTEAPRASARDGWSPPRSRVSLHKEDPSESEEEQIEICSTRGCPNPPSSPAHLPTQAAICPASAKVLSLKYSTPRESVASPREKAACLPGSYTSGPDSSQPSSLLEMSSQEHETHADISTSQNHRPSCAEETTEVTSASSAMENSPLSKVARHFHSPPIILSSPNMVNGLEHDLLDDETLNQYETSINAAASLSSFSVDVPKNGESVLENLHISESQDLDDLLQKPKMIARRPIMAWFKEINKHNQGTHLRSKTEKEQPLMPARSPDSKIQMVSSSQKKGVTVPHSPPQPKTNLENKDLSKKSPAEMLLTNGQKAKCGPKLKRLSLKGKAKVNSEAPAANAVKAGGTDHRKPLISPQTSHKTLSKAVSQRLHVADHEDPDRNTTAAPRSPQCVLESKPPLATSGPLKPSVSDTSIRTFVSPLTSPKPVPEQGMWSRFHMAVLSEPDRGCPTTPKSPKCRAEGRAPRADSGPVSPAASRNGMSVAGNRQSEPRLASHVAADTAQPRPTGEKGGNIMASDRLERTNQLKIVEISAEAVSETVCGNKPAESDRRGGCLAQGNCQEKSEIRLYRQVAESSTSHPSSLPSHASQAEQEMSRSFSMAKLASSSSSLQTAIRKAEYSQGKSSLMSDSRGVPRNSIPGGPSGEDHLYFTPRPATRTYSMPAQFSSHFGREGHPPHSLGRSRDSQVPVTSSVVPEAKASRGGLPSLANGQGIYSVKPLLDTSRNLPATDEGDIISVQETSCLVTDKIKVTRRHYCYEQNWPHESTSFFSVKQRIKSFENLANADRPVAKSGASPFLSVSSKPPIGRRSSGSIVSGSLGHPGDAAARLLRRSLSSCSENQSEAGTLLPQMAKSPSIMTLTISRQNPPETSSKGSDSELKKSLGPLGIPTPTMTLASPVKRNKSSVRHTQPSPVSRSKLQELRALSMPDLDKLCSEDYSAGPSAVLFKTELEITPRRSPGPPAGGVSCPEKGGNRACPGGSGPKTSAAETPSSASDTGEAAQDLPFRRSWSVNLDQLLVSAGDQQRLQSVLSSVGSKSTILTLIQEAKAQSENEEDVCFIVLNRKEGSGLGFSVAGGTDVEPKSITVHRVFSQGAASQEGTMNRGDFLLSVNGASLAGLAHGNVLKVLHQAQLHKDALVVIKKGMDQPRPSARQEPPTANGKGLLSRKTIPLEPGIGRSVAVHDALCVEVLKTSAGLGLSLDGGKSSVTGDGPLVIKRVYKGGAAEQAGIIEAGDEILAINGKPLVGLMHFDAWNIMKSVPEGPVQLLIRKHRNSS.

The PDZ 1 domain occupies 85 to 182; sequence LSFGNIPVFG…LIMLRRFKHK (98 aa). A disordered region spans residues 185–318; it reads STYNGNSSNS…RFSKGGKTDF (134 aa). Low complexity predominate over residues 189–202; it reads GNSSNSSEPGETPT. Residues 280-296 are compositionally biased toward basic and acidic residues; the sequence is HLERSEVDRGTEHRIPK. Residues 334–419 form the PDZ 2 domain; it reads KMELLKESDG…MVQLVVASKE (86 aa). A compositionally biased stretch (polar residues) spans 437 to 447; it reads TSSVEDVSSWT. The segment at 437 to 501 is disordered; sequence TSSVEDVSSW…PKQGSNKIKL (65 aa). Positions 448–461 are enriched in acidic residues; the sequence is DNEDQEADGEEDEG. A Phosphoserine modification is found at serine 568. A PDZ 3 domain is found at 586–672; it reads IIGLYKEKGK…GLFVLTVRTK (87 aa). The span at 678-697 shows a compositional bias: polar residues; the sequence is LTPCSTPTHMSRSASPNFNT. Residues 678–723 form a disordered region; that stretch reads LTPCSTPTHMSRSASPNFNTSGGASAGGSDEGSSSSLGRKTPGPKD. The 86-residue stretch at 728–813 folds into the PDZ 4 domain; the sequence is EVTLNKEPRV…GPVRLVIGRH (86 aa). Polar residues-rich tracts occupy residues 832–843 and 894–908; these read YQESKEANSSPG and GCSTSEEGSLPPSTS. 2 disordered regions span residues 832–852 and 879–921; these read YQESKEANSSPGLGTPLKSPS and DFMV…ANSL. Serine 944 and serine 948 each carry phosphoserine. Disordered regions lie at residues 984-1033, 1062-1155, 1216-1493, 1530-1620, 1638-1712, 1809-1865, 1892-1976, 2009-2079, 2135-2166, 2178-2211, 2232-2251, 2353-2383, 2426-2481, and 2516-2564; these read SLPG…ISAP, SAEA…PCDL, KAAS…GAPA, FHED…LPTQ, PRES…SPLS, NQGT…DLSK, GKAK…SVSD, PDRG…GNIM, QVAESSTSHPSSLPSHASQAEQEMSRSFSMAK, IRKAEYSQGKSSLMSDSRGVPRNSIPGGPSGEDH, HFGREGHPPHSLGRSRDSQV, AKSGASPFLSVSSKPPIGRRSSGSIVSGSLG, SRQN…SRSK, and ITPR…GEAA. Residues 1012–1022 show a composition bias toward basic and acidic residues; it reads MDVHNQEERPR. Polar residues-rich tracts occupy residues 1092 to 1111, 1138 to 1147, 1221 to 1236, 1250 to 1269, 1305 to 1315, 1384 to 1401, and 1440 to 1453; these read RTDTQSPTNTGSPSSPQQKS, SGSQTVNLTG, LGQQPMTELDSSSDLI, SKTSVDTGQVSRPENPSQPA, TRSASETSTPH, SVSSRAPQASLSMLPSTD, and RSPSSQTGDSGSQE. Residues 1662–1672 show a composition bias toward low complexity; sequence SSQPSSLLEMS. The span at 1698 to 1711 shows a compositional bias: polar residues; sequence EVTSASSAMENSPL. Serine 1850 carries the post-translational modification Phosphoserine. The span at 1919–1931 shows a compositional bias: polar residues; sequence SPQTSHKTLSKAV. A compositionally biased stretch (basic and acidic residues) spans 1936–1945; that stretch reads HVADHEDPDR. Residues 2139 to 2152 are compositionally biased toward low complexity; the sequence is SSTSHPSSLPSHAS. Residues 2370-2383 show a composition bias toward low complexity; the sequence is GRRSSGSIVSGSLG. Composition is skewed to polar residues over residues 2426-2437, 2470-2480, and 2546-2559; these read SRQNPPETSSKG, RHTQPSPVSRS, and PKTSAAETPSSASD. In terms of domain architecture, PDZ 5 spans 2622-2706; sequence FIVLNRKEGS…HKDALVVIKK (85 aa). A disordered region spans residues 2709 to 2729; that stretch reads DQPRPSARQEPPTANGKGLLS. The PDZ 6 domain maps to 2750-2835; that stretch reads CVEVLKTSAG…GPVQLLIRKH (86 aa).

In terms of assembly, interacts with SCN10A, CTNND2 and PKP4. Post-translationally, a secreted form is produced by caspase-mediated proteolytic cleavage. In terms of tissue distribution, isoform 2 is expressed (at protein level) in prostate and many prostate tumors.

It localises to the nucleus. Its subcellular location is the cytoplasm. The protein localises to the endoplasmic reticulum. The protein resides in the secreted. The protein is PDZ domain-containing protein 2 (PDZD2) of Homo sapiens (Human).